The following is a 268-amino-acid chain: Thiazole synthase (268 aa).

The Schiff-base intermediate with DXP role is filled by K108. Residues G169, 195–196, and 217–218 contribute to the 1-deoxy-D-xylulose 5-phosphate site; these read AG and NS. The disordered stretch occupies residues 248-268; that stretch reads RLKENPLASPSSPLDGVISNN. The segment covering 255 to 268 has biased composition (polar residues); sequence ASPSSPLDGVISNN.

Belongs to the ThiG family. Homotetramer. Forms heterodimers with either ThiH or ThiS.

The protein resides in the cytoplasm. It catalyses the reaction [ThiS sulfur-carrier protein]-C-terminal-Gly-aminoethanethioate + 2-iminoacetate + 1-deoxy-D-xylulose 5-phosphate = [ThiS sulfur-carrier protein]-C-terminal Gly-Gly + 2-[(2R,5Z)-2-carboxy-4-methylthiazol-5(2H)-ylidene]ethyl phosphate + 2 H2O + H(+). It participates in cofactor biosynthesis; thiamine diphosphate biosynthesis. Catalyzes the rearrangement of 1-deoxy-D-xylulose 5-phosphate (DXP) to produce the thiazole phosphate moiety of thiamine. Sulfur is provided by the thiocarboxylate moiety of the carrier protein ThiS. In vitro, sulfur can be provided by H(2)S. In Prochlorococcus marinus (strain NATL2A), this protein is Thiazole synthase.